Reading from the N-terminus, the 385-residue chain is MAAFLSAGLGILAPSETYPLPTTSSGWEPRLGSPFPSGPCTSSTGAQAVAEPTGQGPKNPRVSRVTVQLEMKPLWEEFNQLGTEMIVTKAGRRMFPPFQVKILGMDSLADYALLMDFIPLDDKRYRYAFHSSAWLVAGKADPATPGRVHFHPDSPAKGAQWMRQIVSFDKLKLTNNLLDDNGHIILNSMHRYQPRFHVVFVDPRKDSERYAQENFKSFIFTETQFTAVTAYQNHRITQLKIASNPFAKGFRESDLDSWPVAPRPLLSVPARSHSSLSPCVLKGATDREKDPNKASASTSKTPAWLHHQLLPPPEVLLAPATYRPVTYQSLYSGAPSHLGIPRTRPAPYPLPNIRADRDQGGLPLPAGLGLLSPTVVCLGPGQDSQ.

The tract at residues 22-61 is disordered; it reads TTSSGWEPRLGSPFPSGPCTSSTGAQAVAEPTGQGPKNPR. The T-box DNA-binding region spans 69-252; the sequence is LEMKPLWEEF…SNPFAKGFRE (184 aa).

Its subcellular location is the nucleus. Probable transcriptional regulator involved in developmental processes. The protein is T-box transcription factor TBX10 (TBX10) of Homo sapiens (Human).